We begin with the raw amino-acid sequence, 185 residues long: ATP synthase subunit delta, chloroplastic (185 aa).

It belongs to the ATPase delta chain family. As to quaternary structure, F-type ATPases have 2 components, F(1) - the catalytic core - and F(0) - the membrane proton channel. F(1) has five subunits: alpha(3), beta(3), gamma(1), delta(1), epsilon(1). CF(0) has four main subunits: a(1), b(1), b'(1) and c(10-14). The alpha and beta chains form an alternating ring which encloses part of the gamma chain. F(1) is attached to F(0) by a central stalk formed by the gamma and epsilon chains, while a peripheral stalk is formed by the delta, b and b' chains.

It localises to the plastid. The protein resides in the chloroplast thylakoid membrane. F(1)F(0) ATP synthase produces ATP from ADP in the presence of a proton or sodium gradient. F-type ATPases consist of two structural domains, F(1) containing the extramembraneous catalytic core and F(0) containing the membrane proton channel, linked together by a central stalk and a peripheral stalk. During catalysis, ATP synthesis in the catalytic domain of F(1) is coupled via a rotary mechanism of the central stalk subunits to proton translocation. Functionally, this protein is part of the stalk that links CF(0) to CF(1). It either transmits conformational changes from CF(0) to CF(1) or is implicated in proton conduction. This chain is ATP synthase subunit delta, chloroplastic, found in Gracilaria tenuistipitata var. liui (Red alga).